A 590-amino-acid polypeptide reads, in one-letter code: Type I inositol polyphosphate 5-phosphatase 1 (590 aa).

The interval 47 to 73 (DYSADSDDDYEDRSQEFDPISSGVTNP) is disordered. Residues 48–57 (YSADSDDDYE) show a composition bias toward acidic residues. Phosphoserine is present on S60. 2 catalytic regions span residues 445 to 460 (ERII…INLS) and 523 to 538 (GKRR…WNGK).

This sequence belongs to the inositol polyphosphate 5-phosphatase family. In terms of tissue distribution, expressed ubiquitously.

It catalyses the reaction 1D-myo-inositol 1,4,5-trisphosphate + H2O = 1D-myo-inositol 1,4-bisphosphate + phosphate. The catalysed reaction is 1D-myo-inositol 1,3,4,5-tetrakisphosphate + H2O = 1D-myo-inositol 1,3,4-trisphosphate + phosphate. Has phosphatase activity toward Ins(1,4,5)P3 and Ins(1,3,4,5)P4, but not toward Ins(1,4)P2, Ins(1)P. Seems to be involved in the abscisic acid (ABA) signaling pathway. Could also be able to hydrolyze PtdIns(4,5)P2 and PtdIns(3,4,5)P3. The chain is Type I inositol polyphosphate 5-phosphatase 1 from Arabidopsis thaliana (Mouse-ear cress).